The chain runs to 164 residues: OV-17 antigen (164 aa).

An N-terminal signal peptide occupies residues 1 to 16 (MKFVILLTIGLLVVAA). A disordered region spans residues 24 to 43 (QQQQQQQQQRDEREIPPFLE).

The protein belongs to the SXP/RAL-2 family. In terms of tissue distribution, high levels in the hypodermal layer of the adult female.

The sequence is that of OV-17 antigen (OV17) from Onchocerca volvulus.